The following is a 107-amino-acid chain: CRISPR-associated endoribonuclease Cas2 (107 aa).

A Mg(2+)-binding site is contributed by Asp-6.

It belongs to the CRISPR-associated endoribonuclease Cas2 protein family. Homodimer, forms a heterotetramer with a Cas1 homodimer. It depends on Mg(2+) as a cofactor.

Its function is as follows. CRISPR (clustered regularly interspaced short palindromic repeat), is an adaptive immune system that provides protection against mobile genetic elements (viruses, transposable elements and conjugative plasmids). CRISPR clusters contain sequences complementary to antecedent mobile elements and target invading nucleic acids. CRISPR clusters are transcribed and processed into CRISPR RNA (crRNA). Functions as a ssRNA-specific endoribonuclease. Involved in the integration of spacer DNA into the CRISPR cassette. This Streptococcus mutans serotype c (strain NN2025) protein is CRISPR-associated endoribonuclease Cas2.